A 471-amino-acid polypeptide reads, in one-letter code: GDP-fucose protein O-fucosyltransferase 3 (471 aa).

Residues 1–8 lie on the Cytoplasmic side of the membrane; it reads MNRMWEKK. A helical; Signal-anchor for type II membrane protein membrane pass occupies residues 9–29; the sequence is FWISCFFIILFFILVTLQVMV. At 30 to 471 the chain is on the lumenal side; sequence ELGRFEKRET…EFWNLVFKFQ (442 aa). N-linked (GlcNAc...) asparagine glycans are attached at residues N102, N122, N160, and N310. Residues C381 and C384 are joined by a disulfide bond. An N-linked (GlcNAc...) asparagine glycan is attached at N457.

This sequence belongs to the glycosyltransferase 10 family.

It localises to the endoplasmic reticulum membrane. The catalysed reaction is L-threonyl-[protein] + GDP-beta-L-fucose = 3-O-(alpha-L-fucosyl)-L-threonyl-[protein] + GDP + H(+). The enzyme catalyses L-seryl-[protein] + GDP-beta-L-fucose = 3-O-(alpha-L-fucosyl)-L-seryl-[protein] + GDP + H(+). It functions in the pathway protein modification; protein glycosylation. Protein O-fucosyltransferase that specifically catalyzes O-fucosylation of serine or threonine residues in EMI domains of target proteins. Attaches fucose through an O-glycosidic linkage. O-fucosylation of EMI domain-containing proteins may be required for facilitating protein folding and secretion. This chain is GDP-fucose protein O-fucosyltransferase 3 (fut10), found in Xenopus tropicalis (Western clawed frog).